Consider the following 136-residue polypeptide: MTTLNTGSARISIMNGSSVASTSPSVKCKEDQGLNGHEEKENPFAEYMWMENEEDFNRQVEEELQEQDFLDRCFQEMLDEEDQDWFIPARDLPQAVGHLQQQLNGLSVGDSHESEDILSKSNLNPDAKEFVPGVKY.

Over residues 15-25 (NGSSVASTSPS) the composition is skewed to polar residues. Disordered stretches follow at residues 15–40 (NGSS…HEEK) and 107–136 (SVGD…GVKY). Over residues 27 to 40 (KCKEDQGLNGHEEK) the composition is skewed to basic and acidic residues.

It belongs to the PAIP2 family. Interacts (via central acidic portion and C-terminus) with PABPC1 (via the second and third RRM domains and the C-terminus). Post-translationally, ubiquitinated in vitro. Expressed at very high levels in pancreas, at high levels in testis and at moderately high levels in brain, heart and lung (at protein level).

Functionally, inhibits translation of capped and polyadenylated mRNAs by displacing PABPC1 from the poly(A) tail. The protein is Polyadenylate-binding protein-interacting protein 2B (Paip2b) of Mus musculus (Mouse).